Reading from the N-terminus, the 467-residue chain is Serum response factor homolog B (467 aa).

Over residues 1 to 15 the composition is skewed to polar residues; sequence MELNMNQYDNIESND. Disordered regions lie at residues 1–38, 115–245, and 301–467; these read MELN…KSGR, NTPD…NNLT, and IQNI…PSDL. The region spanning 36–96 is the MADS-box domain; it reads SGRRKINIEF…GHVYTFATPK (61 aa). Over residues 128-205 the composition is skewed to low complexity; sequence NNNNGNNSNN…NNNNNNNNNN (78 aa). A compositionally biased stretch (basic and acidic residues) spans 206 to 220; that stretch reads CKEEQNMNIPNERKS. Composition is skewed to low complexity over residues 222–245, 301–334, 347–392, and 401–440; these read NNIN…NNLT, IQNI…SNNI, GSNS…NSNN, and PSPI…YGGY. Positions 442–467 are enriched in polar residues; it reads QPFSRNYPLQSNIATNSTVSKAPSDL.

It localises to the nucleus. The protein is Serum response factor homolog B (srfB) of Dictyostelium discoideum (Social amoeba).